Reading from the N-terminus, the 238-residue chain is Probable transcriptional regulatory protein MGAS10750_Spy0264 (238 aa).

This sequence belongs to the TACO1 family. YeeN subfamily.

The protein resides in the cytoplasm. The chain is Probable transcriptional regulatory protein MGAS10750_Spy0264 from Streptococcus pyogenes serotype M4 (strain MGAS10750).